Reading from the N-terminus, the 254-residue chain is Diphthine synthase (254 aa).

Residues Leu11, Asp87, Ile90, 115 to 116 (SV), Leu167, Leu208, and His233 each bind S-adenosyl-L-methionine.

Belongs to the diphthine synthase family. In terms of assembly, homodimer.

It carries out the reaction 2-[(3S)-amino-3-carboxypropyl]-L-histidyl-[translation elongation factor 2] + 3 S-adenosyl-L-methionine = diphthine-[translation elongation factor 2] + 3 S-adenosyl-L-homocysteine + 3 H(+). It participates in protein modification; peptidyl-diphthamide biosynthesis. Functionally, S-adenosyl-L-methionine-dependent methyltransferase that catalyzes the trimethylation of the amino group of the modified target histidine residue in translation elongation factor 2 (EF-2), to form an intermediate called diphthine. The three successive methylation reactions represent the second step of diphthamide biosynthesis. This chain is Diphthine synthase, found in Metallosphaera sedula (strain ATCC 51363 / DSM 5348 / JCM 9185 / NBRC 15509 / TH2).